We begin with the raw amino-acid sequence, 1906 residues long: DENN domain-containing protein 4C (1906 aa).

Positions 40–199 (KAPITDIAVI…NVFLCYKKSV (160 aa)) constitute an MABP domain. Positions 191 to 363 (VFLCYKKSVP…NIPFPSPQRP (173 aa)) constitute a uDENN domain. Residues 384-520 (PLPLSGANFS…PCKSLLGTLR (137 aa)) enclose the cDENN domain. In terms of domain architecture, dDENN spans 522-640 (LYQQLCSVHR…CSFVSDKDTG (119 aa)). 3 positions are modified to phosphoserine: S702, S736, and S740. Residues 818–852 (DEVCYRVVMQLCGLWVNPVLAVRVLFEMKTARIKP) form a PPR repeat. Over residues 904–917 (SQVFSISGGQSDQG) the composition is skewed to polar residues. Disordered regions lie at residues 904–942 (SQVF…PPEL) and 963–984 (LQPT…SIVK). Positions 920–939 (SKDELVKEGADGHAPEEHTP) are enriched in basic and acidic residues. Position 966 is a phosphothreonine (T966). A compositionally biased stretch (pro residues) spans 966 to 975 (TPEPQSPTEP). At S971 the chain carries Phosphoserine. Position 973 is a phosphothreonine (T973). S987, S1000, S1043, S1058, S1096, and S1123 each carry phosphoserine. Polar residues predominate over residues 1154–1171 (NSLQSNSHSDQSRDTQAG). Positions 1154–1184 (NSLQSNSHSDQSRDTQAGAQDPVNKRSSSYA) are disordered. A phosphoserine mark is found at S1181, S1221, S1240, S1248, and S1274. A disordered region spans residues 1246–1317 (SCSMELHGEG…PQSPYRAYKD (72 aa)). The span at 1281-1291 (PPARDSTETEK) shows a compositional bias: basic and acidic residues. A compositionally biased stretch (polar residues) spans 1292 to 1302 (SSPAVSSSKTL). Residues S1321, S1333, and S1342 each carry the phosphoserine modification. Disordered regions lie at residues 1410 to 1440 (SPNT…GDVG), 1548 to 1577 (STSG…SAEP), and 1596 to 1628 (ASYT…LSKR). Low complexity predominate over residues 1423–1437 (LTQSNTSLGSSSSSG). Composition is skewed to polar residues over residues 1548–1564 (STSG…SASE) and 1611–1628 (GDVQ…LSKR). 5 positions are modified to phosphoserine: S1620, S1624, S1626, S1637, and S1796.

Phosphorylated in response to insulin.

It localises to the cytoplasmic vesicle membrane. It is found in the cell membrane. The protein localises to the cytoplasm. The protein resides in the cytosol. Functionally, guanine nucleotide exchange factor (GEF) activating RAB10. Promotes the exchange of GDP to GTP, converting inactive GDP-bound RAB10 into its active GTP-bound form. Thereby, stimulates SLC2A4/GLUT4 glucose transporter-enriched vesicles delivery to the plasma membrane in response to insulin. The sequence is that of DENN domain-containing protein 4C (Dennd4c) from Mus musculus (Mouse).